We begin with the raw amino-acid sequence, 278 residues long: S-formylglutathione hydrolase YeiG (278 aa).

Residues S145, D223, and H256 each act as charge relay system in the active site.

The protein belongs to the esterase D family.

The catalysed reaction is S-formylglutathione + H2O = formate + glutathione + H(+). In terms of biological role, serine hydrolase involved in the detoxification of formaldehyde. Hydrolyzes S-formylglutathione to glutathione and formate. In Escherichia coli O157:H7, this protein is S-formylglutathione hydrolase YeiG (yeiG).